Reading from the N-terminus, the 452-residue chain is Neuronal acetylcholine receptor subunit alpha-5 (452 aa).

A signal peptide spans 1-27 (MVQLLAGRWRPTGARRGTRGGLPELSS). The Extracellular segment spans residues 28 to 239 (AAKHEDSLFR…VIKRLPLFYT (212 aa)). Residues Asn-140, Asn-168, and Asn-214 are each glycosylated (N-linked (GlcNAc...) asparagine). An intrachain disulfide couples Cys-155 to Cys-169. Cysteines 219 and 220 form a disulfide. Transmembrane regions (helical) follow at residues 240–260 (LFLI…FYLP), 269–289 (LCTS…EIIP), and 302–322 (LVFT…AINI). Residues 323–414 (HHRSSSTHNA…KFIAQVLDRM (92 aa)) lie on the Cytoplasmic side of the membrane. Residues 415-435 (FLWTFLLVSIIGTLGLFVPVI) form a helical membrane-spanning segment. The Extracellular segment spans residues 436-452 (YKWANIIVPVHIGNTIK).

It belongs to the ligand-gated ion channel (TC 1.A.9) family. Acetylcholine receptor (TC 1.A.9.1) subfamily. Alpha-5/CHRNA5 sub-subfamily. In terms of assembly, neuronal AChR that forms heteropentamers composed of two different type of subunits: alpha and non-alpha (beta). CHRNA5/alpha-5 subunit is only able to form functional nAChRs when co-assembled with another alpha subunit, can be combined to CHRNA4/alpha-4 or CHRNA3/alpha-3 and CHRNB4/beta-4 or CHRNB2/beta-2 to give rise to functional receptors. Interacts with LYPD6.

It is found in the synaptic cell membrane. Its subcellular location is the cell membrane. It carries out the reaction Ca(2+)(in) = Ca(2+)(out). The catalysed reaction is K(+)(in) = K(+)(out). The enzyme catalyses Na(+)(in) = Na(+)(out). Its activity is regulated as follows. Activated by a myriad of ligands such as acetylcholine, cytisine, nicotine, choline and epibatidine. In terms of biological role, component of neuronal acetylcholine receptors (nAChRs) that function as pentameric, ligand-gated cation channels with high calcium permeability among other activities. nAChRs are excitatory neurotrasnmitter receptors formed by a collection of nAChR subunits known to mediate synaptic transmission in the nervous system and the neuromuscular junction. Each nAchR subunit confers differential attributes to channel properties, including activation, deactivation and desensitization kinetics, pH sensitivity, cation permeability, and binding to allosteric modulators. Has an accessory rather than functional role and is only able to form functional nAChRs when co-assembled with another beta subunit. Participates in pentameric assemblies along with CHRNA3, CHRNA4, CHRNB2 and CHRNB4. Increases receptor sensitivity to acetylcholine and nicotine when associated with CHRNA4 and CHRNB2. Plays a role in nicotine addiction. The sequence is that of Neuronal acetylcholine receptor subunit alpha-5 (Chrna5) from Rattus norvegicus (Rat).